Consider the following 311-residue polypeptide: Probable cell division protein WhiA (311 aa).

Positions 274–308 (SLKELGEMIPSGAISKSGINHRIRKINEFAEKLRE) form a DNA-binding region, H-T-H motif.

This sequence belongs to the WhiA family.

Functionally, involved in cell division and chromosome segregation. The sequence is that of Probable cell division protein WhiA from Enterococcus faecalis (strain ATCC 700802 / V583).